The primary structure comprises 58 residues: UPF0391 membrane protein Gbem_0127 (58 aa).

2 helical membrane-spanning segments follow: residues 4–24 (WALIFFIIAIIAAVFGFGGIA) and 33–53 (ILFYLFLVVAVVMLVSALLAG).

The protein belongs to the UPF0391 family.

The protein resides in the cell membrane. This chain is UPF0391 membrane protein Gbem_0127, found in Citrifermentans bemidjiense (strain ATCC BAA-1014 / DSM 16622 / JCM 12645 / Bem) (Geobacter bemidjiensis).